Reading from the N-terminus, the 288-residue chain is Glandicoline B O-methyltransferase roqN (288 aa).

S-adenosyl-L-methionine-binding positions include Thr-57, Asp-82, and 109–110; that span reads DA.

This sequence belongs to the class I-like SAM-binding methyltransferase superfamily.

It catalyses the reaction glandicoline B + S-adenosyl-L-methionine = meleagrin + S-adenosyl-L-homocysteine + H(+). It participates in alkaloid biosynthesis. Glandicoline B O-methyltransferase; part of the gene cluster that mediates the biosynthesis of the mycotoxin meleagrin. The first stage is catalyzed by the dipeptide synthase roqA which condenses histidine and tryptophan to produce histidyltryptophanyldiketopiperazine (HTD). HTD is then converted to roquefortine C through two possible pathways. In the first pathway, prenyltransferase roqD transforms HTD to the intermediate roquefortine D, which is in turn converted to roquefortine C by the cytochrome P450 monooxygenase roqR. In the second pathway, HTD is first converted to the intermediate dehydrohistidyltryptophanyldi-ketopiperazine (DHTD) by roqR which is then prenylated by roqD to form roquefortine C. Roquefortine C can be further transformed to meleagrin via three more reactions including oxydation to glandicolin A by roqM, which is further reduced to glandicoline B by roqO. Finally, glandicoline B is converted to meleagrin by the glandicoline B O-methyltransferase roqN. More studies identified further branching and additional metabolites produced by the roquefortine/meleagrin cluster, including roquefortine F, roquefortine L, roquefortine M, roquefortine N and neoxaline. The sequence is that of Glandicoline B O-methyltransferase roqN from Penicillium rubens (strain ATCC 28089 / DSM 1075 / NRRL 1951 / Wisconsin 54-1255) (Penicillium chrysogenum).